Consider the following 68-residue polypeptide: Alpha-conotoxin Lp1.1 (68 aa).

A signal peptide spans 1–21; the sequence is MGMRMMFIMFMLVVLATTVVT. The propeptide occupies 22 to 48; that stretch reads FTSDRALDAMNAAASNKASRLIALAVR. 2 disulfides stabilise this stretch: Cys-50–Cys-56 and Cys-51–Cys-64. The lacks the Ser-Xaa-Pro motif that is crucial for potent interaction with nAChR stretch occupies residues 52–54; the sequence is ARA. Residue Gly-65 is modified to Glycine amide. A propeptide spanning residues 66 to 68 is cleaved from the precursor; it reads GGR.

The protein belongs to the conotoxin A superfamily. In terms of tissue distribution, expressed by the venom duct.

It localises to the secreted. Its function is as follows. Alpha-conotoxins act on postsynaptic membranes, they bind to the nicotinic acetylcholine receptors (nAChR) and thus inhibit them. Synthetic peptide inhibits alpha-6/alpha-3/beta-2 and alpha-3/beta-2 nicotinic acetylcholine receptors and causes uncoordinated movement when intramuscularly injected into goldfish. Has a distinct nAChR binding mode from other alpha-conotoxins, due to a different three residue motif (Ala-Xaa-Ala instead of the conserved Ser-Xaa-Pro motif). The sequence is that of Alpha-conotoxin Lp1.1 from Conus leopardus (Leopard cone).